We begin with the raw amino-acid sequence, 46 residues long: Small, acid-soluble spore protein N (46 aa).

Positions 1-46 (MAKMKHGSAQFRPDHLGTQPRKSDANKGKKMNTKGNENPQYIPPKG) are disordered.

The protein belongs to the SspN family.

The protein localises to the spore core. This Halalkalibacterium halodurans (strain ATCC BAA-125 / DSM 18197 / FERM 7344 / JCM 9153 / C-125) (Bacillus halodurans) protein is Small, acid-soluble spore protein N.